The sequence spans 273 residues: Diphthine methyl ester synthase (273 aa).

S-adenosyl-L-methionine contacts are provided by residues Leu10, Asp87, Gly90, 115–116, Leu166, Val224, and His249; that span reads SI.

Belongs to the diphthine synthase family.

The enzyme catalyses 2-[(3S)-amino-3-carboxypropyl]-L-histidyl-[translation elongation factor 2] + 4 S-adenosyl-L-methionine = diphthine methyl ester-[translation elongation factor 2] + 4 S-adenosyl-L-homocysteine + 3 H(+). Its pathway is protein modification; peptidyl-diphthamide biosynthesis. Functionally, S-adenosyl-L-methionine-dependent methyltransferase that catalyzes four methylations of the modified target histidine residue in translation elongation factor 2 (EF-2), to form an intermediate called diphthine methyl ester. The four successive methylation reactions represent the second step of diphthamide biosynthesis. This is Diphthine methyl ester synthase (dph5) from Dictyostelium discoideum (Social amoeba).